Here is an 867-residue protein sequence, read N- to C-terminus: Cilium assembly protein DZIP1 (867 aa).

The interval 12 to 203 (MPFQKHVYYP…KANYYQCHFC (192 aa)) is mediates interaction with PCM1. Residues 12–367 (MPFQKHVYYP…QDFHNVMQLL (356 aa)) form a mediates interaction with GLI3 and localization to the cilium basal body region. The tract at residues 154 to 278 (CDGEQSKKLL…SKEYEMQKTK (125 aa)) is required for interaction with DAZ1. The C2H2-type zinc finger occupies 198–221 (YQCHFCDKAFMNQAFLQSHIQRRH). The residue at position 226 (S226) is a Phosphoserine; by PLK1. Coiled coils occupy residues 230-340 (YQKN…KSNI), 401-445 (TSMI…FTCN), and 568-588 (DQLH…EREI). Residues 446–617 (PLNSISEPKG…EKALLSSDQC (172 aa)) form a mediates interaction with GDI2 and RAB8A region. 3 stretches are compositionally biased toward polar residues: residues 643–654 (LIRQKAVSTDRT), 671–680 (KSSTITTPPF), and 708–718 (NKGSFGKNTVK). Disordered stretches follow at residues 643–768 (LIRQ…GGTN) and 796–867 (SLEE…TSDV). Residues 722-733 (DGTEGSEIEDTD) are compositionally biased toward acidic residues. The segment covering 807–823 (SGKEQKEPPPAKNEPHF) has biased composition (basic and acidic residues). The segment covering 848 to 859 (SSTLKSSLVTVT) has biased composition (low complexity).

It belongs to the DZIP C2H2-type zinc-finger protein family. As to quaternary structure, interacts with DAZ1. Interacts with the BBSome; recruits the BBSome to centriolar satellites of the cilium. Interacts with PCM1; localizes DZIP1 and the associated BBSome to centriolar satellites. Interacts with RAB8A (GDP-bound inactive form); recruits RAB8A to the basal body of the cilium and prevents its inhibition by GDI2. Interacts with GDI2; negatively regulates the interaction of GDI2 with GDP-bound RAB8A. Interacts with GLI3; retains GLI3 within the cytoplasm. Interacts with CEP164. Interacts with IFT88. Post-translationally, phosphorylation at Ser-226 by PLK1 before mitosis prevents interaction with PCM1 and localization to centriolar satellites. Thereby, it negatively regulates the localization of the BBSome to centriolar satellites. In terms of tissue distribution, predominantly expressed in testis (at protein level). Also expressed in fetal brain, adult oocytes and ovary. Expressed in undifferentiated ES cells. In testis, it is specifically expressed in germ cells (at protein level). Expressed in mature germ cells and secondary spermatocytes, while it is weakly or not expressed in primary spermatocytes.

It localises to the cytoplasm. Its subcellular location is the cytoskeleton. The protein resides in the cilium basal body. It is found in the microtubule organizing center. The protein localises to the centrosome. It localises to the centriolar satellite. Its subcellular location is the centriole. The protein resides in the nucleus. It is found in the nucleus speckle. In terms of biological role, molecular adapter that recruits protein complexes required for cilium assembly and function to the cilium basal body. At the exit of mitosis, localizes to the basal body and ciliary base of the forming primary cilium where it recruits and activates RAB8A to direct vesicle-mediated transport of proteins to the cilium. Also recruits the BBSome, a complex involved in cilium biogenesis, by bridging it to PCM1 at the centriolar satellites of the cilium. It is also required for the recruitment to the cilium basal body of the intraflagellar transport (IFT) machinery as well as the ciliary appendage proteins CEP164 and NINEIN. Functions as a regulator of Hedgehog signaling both through its role in cilium assembly but also probably through its ability to retain GLI3 within the cytoplasm. It is involved in spermatogenesis through its role in organization of the basal body and assembly of the sperm flagellum. Also indirectly involved in heart development through its function in ciliogenesis. This chain is Cilium assembly protein DZIP1, found in Homo sapiens (Human).